The following is a 734-amino-acid chain: Photosystem I P700 chlorophyll a apoprotein A2 (734 aa).

8 consecutive transmembrane segments (helical) span residues 46–69 (IFAS…FHVA), 135–158 (LYTG…LHLQ), 175–199 (LNHH…HVAI), 273–291 (MAHH…GHMY), 330–353 (LHFQ…QHMY), 369–395 (AALY…IFFL), 417–439 (AIIS…LYVH), and 517–535 (FLVH…LILV). Cysteine 559 and cysteine 568 together coordinate [4Fe-4S] cluster. 2 helical membrane-spanning segments follow: residues 575 to 596 (AFYL…YWHW) and 643 to 665 (LSVW…MFLI). Histidine 654, methionine 662, and tyrosine 670 together coordinate chlorophyll a. Tryptophan 671 contacts phylloquinone. A helical transmembrane segment spans residues 707–727 (LVGLAHFSVGYIFTYAAFLIA).

The protein belongs to the PsaA/PsaB family. The PsaA/B heterodimer binds the P700 chlorophyll special pair and subsequent electron acceptors. PSI consists of a core antenna complex that captures photons, and an electron transfer chain that converts photonic excitation into a charge separation. The eukaryotic PSI reaction center is composed of at least 11 subunits. P700 is a chlorophyll a/chlorophyll a' dimer, A0 is one or more chlorophyll a, A1 is one or both phylloquinones and FX is a shared 4Fe-4S iron-sulfur center. is required as a cofactor.

It localises to the plastid. The protein resides in the chloroplast thylakoid membrane. It catalyses the reaction reduced [plastocyanin] + hnu + oxidized [2Fe-2S]-[ferredoxin] = oxidized [plastocyanin] + reduced [2Fe-2S]-[ferredoxin]. Its function is as follows. PsaA and PsaB bind P700, the primary electron donor of photosystem I (PSI), as well as the electron acceptors A0, A1 and FX. PSI is a plastocyanin-ferredoxin oxidoreductase, converting photonic excitation into a charge separation, which transfers an electron from the donor P700 chlorophyll pair to the spectroscopically characterized acceptors A0, A1, FX, FA and FB in turn. Oxidized P700 is reduced on the lumenal side of the thylakoid membrane by plastocyanin. This chain is Photosystem I P700 chlorophyll a apoprotein A2, found in Adiantum capillus-veneris (Maidenhair fern).